The sequence spans 269 residues: Probable cytochrome c oxidase subunit 2 (269 aa).

3 helical membrane passes run Ile-8–Trp-28, Leu-50–Ile-70, and Ile-87–Pro-107. Residues His-189, Cys-224, Cys-228, and His-232 each coordinate Cu cation.

This sequence belongs to the cytochrome c oxidase subunit 2 family. Cu cation serves as cofactor. The cofactor is heme.

The protein localises to the cell membrane. It catalyses the reaction 4 Fe(II)-[cytochrome c] + O2 + 8 H(+)(in) = 4 Fe(III)-[cytochrome c] + 2 H2O + 4 H(+)(out). In terms of biological role, subunits I and II form the functional core of the enzyme complex. Electrons originating in cytochrome c are transferred via heme a and Cu(A) to the binuclear center formed by heme a3 and Cu(B). This chain is Probable cytochrome c oxidase subunit 2 (ctaC), found in Rickettsia bellii (strain RML369-C).